The sequence spans 318 residues: Dehydration-responsive element-binding protein 2E (318 aa).

Positions 1 to 15 (MESYGRKRAWKKGPT) are enriched in basic residues. Positions 1-24 (MESYGRKRAWKKGPTRGKGGPQNA) are disordered. The AP2/ERF DNA-binding region spans 27–84 (EYRGVRQRTWGKWVAEIREPNKRTRLWLGSFATAEEAALAYDEAARRLYGPDAFLNLP). The segment at 140–178 (ELKNSSSSPTKPPPRTPTRANPPPPPLPTSSPCSTVTNS) is disordered. Positions 149–168 (TKPPPRTPTRANPPPPPLPT) are enriched in pro residues.

This sequence belongs to the AP2/ERF transcription factor family. ERF subfamily.

It is found in the nucleus. In terms of biological role, probable transcriptional activator that binds to the DNA sequence 5'-[AG]CCGAC-3' of the cis-acting dehydration-responsive element (DRE). The chain is Dehydration-responsive element-binding protein 2E (DREB2E) from Oryza sativa subsp. japonica (Rice).